A 543-amino-acid chain; its full sequence is T-complex protein 1 subunit eta (543 aa).

Position 1 is an N-acetylmethionine (M1). ADP is bound at residue G41. G41 is an ATP binding site. K67 carries the post-translational modification N6-acetyllysine. Mg(2+) is bound at residue D92. ADP contacts are provided by G93, T94, T95, S96, S164, and S165. ATP is bound at residue G93. S96 is an ATP binding site. Residues K250 and K320 each carry the N6-acetyllysine modification. R398 and G409 together coordinate ATP. Residue G409 participates in ADP binding. K430 is covalently cross-linked (Glycyl lysine isopeptide (Lys-Gly) (interchain with G-Cter in SUMO2)). ADP contacts are provided by E494 and R499. Residue R499 coordinates ATP. The segment at 524-543 (RSTVDAPTAAGRGRGRGRPH) is disordered. An Omega-N-methylarginine modification is found at R535.

The protein belongs to the TCP-1 chaperonin family. Component of the chaperonin-containing T-complex (TRiC), a hexadecamer composed of two identical back-to-back stacked rings enclosing a protein folding chamber. Each ring is made up of eight different subunits: TCP1/CCT1, CCT2, CCT3, CCT4, CCT5, CCT6A/CCT6, CCT7, CCT8. Interacts with PACRG. Interacts with DLEC1.

It is found in the cytoplasm. It carries out the reaction ATP + H2O = ADP + phosphate + H(+). Component of the chaperonin-containing T-complex (TRiC), a molecular chaperone complex that assists the folding of actin, tubulin and other proteins upon ATP hydrolysis. The TRiC complex mediates the folding of WRAP53/TCAB1, thereby regulating telomere maintenance. This Homo sapiens (Human) protein is T-complex protein 1 subunit eta (CCT7).